The sequence spans 142 residues: Putative pre-16S rRNA nuclease (142 aa).

This sequence belongs to the YqgF nuclease family.

It is found in the cytoplasm. Its function is as follows. Could be a nuclease involved in processing of the 5'-end of pre-16S rRNA. This Lactobacillus helveticus (strain DPC 4571) protein is Putative pre-16S rRNA nuclease.